Consider the following 316-residue polypeptide: Transaldolase (316 aa).

Lysine 132 acts as the Schiff-base intermediate with substrate in catalysis.

The protein belongs to the transaldolase family. Type 1 subfamily. Homodimer.

The protein resides in the cytoplasm. It catalyses the reaction D-sedoheptulose 7-phosphate + D-glyceraldehyde 3-phosphate = D-erythrose 4-phosphate + beta-D-fructose 6-phosphate. The protein operates within carbohydrate degradation; pentose phosphate pathway; D-glyceraldehyde 3-phosphate and beta-D-fructose 6-phosphate from D-ribose 5-phosphate and D-xylulose 5-phosphate (non-oxidative stage): step 2/3. In terms of biological role, transaldolase is important for the balance of metabolites in the pentose-phosphate pathway. This chain is Transaldolase, found in Aliivibrio salmonicida (strain LFI1238) (Vibrio salmonicida (strain LFI1238)).